A 287-amino-acid chain; its full sequence is Syntaxin-11 (287 aa).

Residues 41–71 (LESLYRVIQDIQDENQLLLIDVRRLGRQNVR) adopt a coiled-coil conformation. The 63-residue stretch at 204–266 (LNEIESRHRE…GEAKAQVRKA (63 aa)) folds into the t-SNARE coiled-coil homology domain.

This sequence belongs to the syntaxin family. As to quaternary structure, interacts with the SNARE proteins SNAP-23 and VAMP.

The protein resides in the membrane. The protein localises to the golgi apparatus. It is found in the trans-Golgi network membrane. Its function is as follows. SNARE that acts to regulate protein transport between late endosomes and the trans-Golgi network. The polypeptide is Syntaxin-11 (Stx11) (Mus musculus (Mouse)).